Consider the following 540-residue polypeptide: Light-independent protochlorophyllide reductase subunit B (540 aa).

D36 serves as a coordination point for [4Fe-4S] cluster. D287 (proton donor) is an active-site residue. 422 to 423 is a substrate binding site; the sequence is GL.

It belongs to the ChlB/BchB/BchZ family. Protochlorophyllide reductase is composed of three subunits; BchL, BchN and BchB. Forms a heterotetramer of two BchB and two BchN subunits. [4Fe-4S] cluster serves as cofactor.

It catalyses the reaction chlorophyllide a + oxidized 2[4Fe-4S]-[ferredoxin] + 2 ADP + 2 phosphate = protochlorophyllide a + reduced 2[4Fe-4S]-[ferredoxin] + 2 ATP + 2 H2O. It functions in the pathway porphyrin-containing compound metabolism; bacteriochlorophyll biosynthesis (light-independent). Functionally, component of the dark-operative protochlorophyllide reductase (DPOR) that uses Mg-ATP and reduced ferredoxin to reduce ring D of protochlorophyllide (Pchlide) to form chlorophyllide a (Chlide). This reaction is light-independent. The NB-protein (BchN-BchB) is the catalytic component of the complex. This is Light-independent protochlorophyllide reductase subunit B from Rhodopseudomonas palustris (strain TIE-1).